A 225-amino-acid polypeptide reads, in one-letter code: Pre-mRNA-splicing factor SPF27 (225 aa).

Positions 138–222 (SNDNLALMIE…QGDENKENIR (85 aa)) form a coiled coil.

Belongs to the SPF27 family. Component of the pre-catalytic and catalytic spliceosome complexes. Component of the postcatalytic spliceosome P complex.

It localises to the nucleus. Required for pre-mRNA splicing as component of the activated spliceosome. May have a scaffolding role in the spliceosome assembly as it contacts all other components of the core complex. This Danio rerio (Zebrafish) protein is Pre-mRNA-splicing factor SPF27 (bcas2).